Reading from the N-terminus, the 190-residue chain is MLILGSGSARRKELLESASIDFLLVPSDYNESQVAFEGDTLKYVETIAENKAKALLHKYPLDVILTADTVVEVDGEILGKPKDIEDAQKMLQLLNDKTHHVYTGVCIVSKDKKEVFVESASVTFNKLSTLDIESYIQTKEPMDKAGAYAIQGIGAKLIKQYDGDFHTIMGLPLKLVLEKLKDFNIVPKLK.

D68 acts as the Proton acceptor in catalysis.

It belongs to the Maf family. YhdE subfamily. It depends on a divalent metal cation as a cofactor.

The protein localises to the cytoplasm. It carries out the reaction dTTP + H2O = dTMP + diphosphate + H(+). The catalysed reaction is UTP + H2O = UMP + diphosphate + H(+). Functionally, nucleoside triphosphate pyrophosphatase that hydrolyzes dTTP and UTP. May have a dual role in cell division arrest and in preventing the incorporation of modified nucleotides into cellular nucleic acids. The protein is dTTP/UTP pyrophosphatase of Acholeplasma laidlawii (strain PG-8A).